We begin with the raw amino-acid sequence, 203 residues long: Probable chemoreceptor glutamine deamidase CheD (203 aa).

It belongs to the CheD family.

It catalyses the reaction L-glutaminyl-[protein] + H2O = L-glutamyl-[protein] + NH4(+). In terms of biological role, probably deamidates glutamine residues to glutamate on methyl-accepting chemotaxis receptors (MCPs), playing an important role in chemotaxis. The chain is Probable chemoreceptor glutamine deamidase CheD from Janthinobacterium sp. (strain Marseille) (Minibacterium massiliensis).